Consider the following 909-residue polypeptide: GTPase activating protein homolog 4 (909 aa).

The F-BAR domain occupies 1–257; the sequence is MASLIGSAKL…PTPDFQFESC (257 aa). The 192-residue stretch at 322–513 folds into the Rho-GAP domain; sequence IPIEEIMFKQ…LIIEGYLKLS (192 aa). Residues 529–909 form a disordered region; the sequence is IPSFSNNNNN…QRVPPPPSQS (381 aa). Composition is skewed to low complexity over residues 533-562 and 571-602; these read SNNN…ITTN and SSTT…TPQQ. The span at 609–625 shows a compositional bias: pro residues; sequence SYQPPQPPPTMAPPPLF. Residues 651-674 show a composition bias toward polar residues; the sequence is QYTQSSSNLPPIQLGVTNSPSKPQ. Residues 672–809 are a coiled coil; sequence KPQLSDKQKE…QQLQQQSNGS (138 aa). A compositionally biased stretch (basic and acidic residues) spans 675–716; that stretch reads LSDKQKEKEKEKEKEKEKEKEREKEKEKEKEKEKEKEKEKEK. Positions 723–741 are enriched in low complexity; sequence SSSTSPNSSSLSISNFLSS. A compositionally biased stretch (basic and acidic residues) spans 742-765; the sequence is NKDKDKEKDKEKEKEKEKEKDKEI. A compositionally biased stretch (polar residues) spans 767–785; the sequence is ATNSTPEKPVSNRMSLIFS. Low complexity-rich tracts occupy residues 786-828 and 843-892; these read QQLQ…MSPS and SGTS…ELKS.

It localises to the cytoplasm. It is found in the contractile vacuole. Rho GTPase-activating protein involved in the signal transduction pathway. The polypeptide is GTPase activating protein homolog 4 (mgp4) (Dictyostelium discoideum (Social amoeba)).